The primary structure comprises 420 residues: Serine--tRNA ligase (420 aa).

Position 229-231 (229-231 (TAE)) interacts with L-serine. 260 to 262 (RAE) lines the ATP pocket. Glu283 provides a ligand contact to L-serine. Residue 347 to 350 (EISS) coordinates ATP. Residue Ser382 participates in L-serine binding.

The protein belongs to the class-II aminoacyl-tRNA synthetase family. Type-1 seryl-tRNA synthetase subfamily. As to quaternary structure, homodimer. The tRNA molecule binds across the dimer.

The protein resides in the cytoplasm. It catalyses the reaction tRNA(Ser) + L-serine + ATP = L-seryl-tRNA(Ser) + AMP + diphosphate + H(+). It carries out the reaction tRNA(Sec) + L-serine + ATP = L-seryl-tRNA(Sec) + AMP + diphosphate + H(+). It functions in the pathway aminoacyl-tRNA biosynthesis; selenocysteinyl-tRNA(Sec) biosynthesis; L-seryl-tRNA(Sec) from L-serine and tRNA(Sec): step 1/1. Catalyzes the attachment of serine to tRNA(Ser). Is also able to aminoacylate tRNA(Sec) with serine, to form the misacylated tRNA L-seryl-tRNA(Sec), which will be further converted into selenocysteinyl-tRNA(Sec). The polypeptide is Serine--tRNA ligase (Caldicellulosiruptor bescii (strain ATCC BAA-1888 / DSM 6725 / KCTC 15123 / Z-1320) (Anaerocellum thermophilum)).